Here is a 459-residue protein sequence, read N- to C-terminus: Glutamate--tRNA ligase 2 (459 aa).

The short motif at 8 to 18 (PSPTGYLHIGG) is the 'HIGH' region element. The 'KMSKS' region signature appears at 237–241 (KLSKR). K240 serves as a coordination point for ATP.

It belongs to the class-I aminoacyl-tRNA synthetase family. Glutamate--tRNA ligase type 1 subfamily. Monomer.

Its subcellular location is the cytoplasm. The enzyme catalyses tRNA(Glu) + L-glutamate + ATP = L-glutamyl-tRNA(Glu) + AMP + diphosphate. Catalyzes the attachment of glutamate to tRNA(Glu) in a two-step reaction: glutamate is first activated by ATP to form Glu-AMP and then transferred to the acceptor end of tRNA(Glu). The polypeptide is Glutamate--tRNA ligase 2 (Campylobacter curvus (strain 525.92)).